Consider the following 543-residue polypeptide: ADP,ATP carrier protein 3 (543 aa).

10 consecutive transmembrane segments (helical) span residues 46–66 (VLYL…MGNL), 86–106 (IFLP…LSLF), 111–131 (MFDI…LVVW), 175–195 (FLFL…FNIF), 209–229 (ISVY…LTLV), 243–263 (ELGF…ILAL), 306–326 (LLIA…LVEA), 346–366 (FANF…LVVI), 382–402 (LASL…LIAF), and 504–524 (SVSG…LKYL).

Belongs to the ADP/ATP translocase tlc family.

Its subcellular location is the mitosome membrane. Its function is as follows. ATP transporter involved in the uptake of ATP from the parasite cell cytoplasm into the mitosome matrix. Equilibrates nucleotide pools across a concentration gradient between both sides of the mitosome membrane. This is ADP,ATP carrier protein 3 (NTT3) from Encephalitozoon cuniculi (strain GB-M1) (Microsporidian parasite).